A 151-amino-acid polypeptide reads, in one-letter code: Nucleoside diphosphate kinase (151 aa).

Lys-11, Phe-59, Arg-87, Arg-104, and Asn-114 together coordinate ATP. Residue His-117 is the Pros-phosphohistidine intermediate of the active site.

Belongs to the NDK family. In terms of assembly, homotrimer. The cofactor is Mg(2+).

The catalysed reaction is a 2'-deoxyribonucleoside 5'-diphosphate + ATP = a 2'-deoxyribonucleoside 5'-triphosphate + ADP. The enzyme catalyses a ribonucleoside 5'-diphosphate + ATP = a ribonucleoside 5'-triphosphate + ADP. Functionally, major role in the synthesis of nucleoside triphosphates other than ATP. The ATP gamma phosphate is transferred to the NDP beta phosphate via a ping-pong mechanism, using a phosphorylated active-site intermediate. The protein is Nucleoside diphosphate kinase (ndk1) of Schizosaccharomyces pombe (strain 972 / ATCC 24843) (Fission yeast).